The chain runs to 310 residues: Dihydroorotate dehydrogenase B (NAD(+)), catalytic subunit (310 aa).

Residues Ser-19 and 43-44 (KA) contribute to the FMN site. Residues Lys-43 and 67–71 (NAIGL) contribute to the substrate site. 2 residues coordinate FMN: Asn-97 and Asn-125. Asn-125 is a binding site for substrate. The Nucleophile role is filled by Cys-128. FMN-binding residues include Lys-163 and Ile-189. A substrate-binding site is contributed by 190 to 191 (NT). Residues Gly-215, 241 to 242 (GG), and 263 to 264 (GT) contribute to the FMN site.

The protein belongs to the dihydroorotate dehydrogenase family. Type 1 subfamily. As to quaternary structure, heterotetramer of 2 PyrK and 2 PyrD type B subunits. The cofactor is FMN.

It localises to the cytoplasm. The catalysed reaction is (S)-dihydroorotate + NAD(+) = orotate + NADH + H(+). It participates in pyrimidine metabolism; UMP biosynthesis via de novo pathway; orotate from (S)-dihydroorotate (NAD(+) route): step 1/1. In terms of biological role, catalyzes the conversion of dihydroorotate to orotate with NAD(+) as electron acceptor. This is Dihydroorotate dehydrogenase B (NAD(+)), catalytic subunit (pyrD) from Bacillus pumilus (strain SAFR-032).